The following is a 91-amino-acid chain: Succinate dehydrogenase assembly factor 1A, mitochondrial (91 aa).

Belongs to the complex I LYR family. SDHAF1 subfamily. Interacts with the iron-sulfur protein subunit within the SDH catalytic dimer.

The protein localises to the mitochondrion matrix. Its function is as follows. Plays an essential role in the assembly of succinate dehydrogenase (SDH), an enzyme complex (also referred to as respiratory complex II) that is a component of both the tricarboxylic acid (TCA) cycle and the mitochondrial electron transport chain, and which couples the oxidation of succinate to fumarate with the reduction of ubiquinone (coenzyme Q) to ubiquinol. Promotes maturation of the iron-sulfur protein subunit of the SDH catalytic dimer, protecting it from the deleterious effects of oxidants. May act together with SDHAF3. The chain is Succinate dehydrogenase assembly factor 1A, mitochondrial from Dictyostelium discoideum (Social amoeba).